A 507-amino-acid chain; its full sequence is Maturase K (507 aa).

Belongs to the intron maturase 2 family. MatK subfamily.

It is found in the plastid. The protein resides in the chloroplast. Its function is as follows. Usually encoded in the trnK tRNA gene intron. Probably assists in splicing its own and other chloroplast group II introns. The sequence is that of Maturase K from Cupaniopsis anacardioides (Carrotwood).